A 666-amino-acid polypeptide reads, in one-letter code: Fructose-1,6-bisphosphatase class 3 (666 aa).

This sequence belongs to the FBPase class 3 family. It depends on Mn(2+) as a cofactor.

The catalysed reaction is beta-D-fructose 1,6-bisphosphate + H2O = beta-D-fructose 6-phosphate + phosphate. It functions in the pathway carbohydrate biosynthesis; gluconeogenesis. The chain is Fructose-1,6-bisphosphatase class 3 from Phocaeicola vulgatus (strain ATCC 8482 / DSM 1447 / JCM 5826 / CCUG 4940 / NBRC 14291 / NCTC 11154) (Bacteroides vulgatus).